The chain runs to 311 residues: Non-homologous end joining protein Ku (311 aa).

One can recognise a Ku domain in the interval 26-210 (ISFGLVNIPI…NVNDKELQTA (185 aa)). Residues 269-311 (ASIDRTRRPNRETPAAAPAQAAEPKGAGDKKQKTTRKKASGTS) are disordered. Residues 282-293 (PAAAPAQAAEPK) show a composition bias toward low complexity. Positions 301 to 311 (KTTRKKASGTS) are enriched in basic residues.

This sequence belongs to the prokaryotic Ku family. As to quaternary structure, homodimer. Interacts with LigD.

The protein localises to the spore core. In terms of biological role, with LigD forms a non-homologous end joining (NHEJ) DNA repair enzyme, which repairs dsDNA breaks with reduced fidelity. Binds linear dsDNA with 5'- and 3'- overhangs but not closed circular dsDNA nor ssDNA. Recruits and stimulates the ligase activity of LigD. Probably involved in DNA repair during spore germination. The chain is Non-homologous end joining protein Ku from Bacillus subtilis (strain 168).